The chain runs to 79 residues: Suppressor of tumorigenicity 20 protein (79 aa).

As to expression, expressed in leukocytes, lung, spleen, liver, heart, kidney, muscle and uterine cervix. Down-regulated in cervical cancer.

In terms of biological role, may act as a tumor suppressor. Promotes apoptosis of cancer cells. The chain is Suppressor of tumorigenicity 20 protein (ST20) from Homo sapiens (Human).